Consider the following 307-residue polypeptide: tRNA pseudouridine synthase B (307 aa).

Asp-41 functions as the Nucleophile in the catalytic mechanism.

The protein belongs to the pseudouridine synthase TruB family. Type 1 subfamily.

It carries out the reaction uridine(55) in tRNA = pseudouridine(55) in tRNA. Functionally, responsible for synthesis of pseudouridine from uracil-55 in the psi GC loop of transfer RNAs. The polypeptide is tRNA pseudouridine synthase B (Prochlorococcus marinus (strain MIT 9312)).